We begin with the raw amino-acid sequence, 757 residues long: Amine oxidase [copper-containing] 2 (757 aa).

At 1 to 4 (MNLK) the chain is on the cytoplasmic side. A helical transmembrane segment spans residues 5–25 (VLLLLLGLSFLTVFALVYVLL). Topologically, residues 26–757 (TRQGSFSQSP…NLPSFSYEGL (732 aa)) are extracellular. N-linked (GlcNAc...) asparagine glycosylation is found at Asn-133, Asn-198, and Asn-226. Asp-381 (proton acceptor) is an active-site residue. A disulfide bond links Cys-399 and Cys-425. Tyr-466 serves as the catalytic Schiff-base intermediate with substrate; via topaquinone. 2',4',5'-topaquinone is present on Tyr-466. His-517 and His-519 together coordinate Cu(2+). Ca(2+) contacts are provided by Asp-526, Leu-527, Asp-528, Glu-569, Glu-638, Phe-660, and Asn-662. Asn-663 carries an N-linked (GlcNAc...) asparagine glycan. Residues Glu-664, Asp-670, and Leu-671 each coordinate Ca(2+). His-681 serves as a coordination point for Cu(2+). Cysteines 731 and 738 form a disulfide.

It belongs to the copper/topaquinone oxidase family. Homodimer; disulfide-linked. Probably forms heterodimers with AOC3. Requires Cu(2+) as cofactor. Ca(2+) is required as a cofactor. It depends on L-topaquinone as a cofactor. Topaquinone (TPQ) is generated by copper-dependent autoxidation of a specific tyrosyl residue. In terms of tissue distribution, significantly much highly expressed in retina.

It is found in the cell membrane. The enzyme catalyses 2-phenylethylamine + O2 + H2O = 2-phenylacetaldehyde + H2O2 + NH4(+). It carries out the reaction tryptamine + O2 + H2O = indole-3-acetaldehyde + H2O2 + NH4(+). The catalysed reaction is tyramine + O2 + H2O = (4-hydroxyphenyl)acetaldehyde + H2O2 + NH4(+). Catalyzes the oxidative deamination of primary amines to the corresponding aldehydes with the concomitant production of hydrogen peroxide and ammonia. Has a preference for 2-phenylethylamine, tryptamine and tyramine. Could also act on methylamine and benzylamine but much less efficiently. In Mus musculus (Mouse), this protein is Amine oxidase [copper-containing] 2.